We begin with the raw amino-acid sequence, 118 residues long: Large ribosomal subunit protein bL20 (118 aa).

The protein belongs to the bacterial ribosomal protein bL20 family.

Its function is as follows. Binds directly to 23S ribosomal RNA and is necessary for the in vitro assembly process of the 50S ribosomal subunit. It is not involved in the protein synthesizing functions of that subunit. In Protochlamydia amoebophila (strain UWE25), this protein is Large ribosomal subunit protein bL20.